The sequence spans 33 residues: Photosystem II reaction center protein Psb30 (33 aa).

A helical transmembrane segment spans residues 5–25 (ILSQLIAIAVTLFLGPVVVIL).

The protein belongs to the Psb30/Ycf12 family. As to quaternary structure, PSII is composed of 1 copy each of membrane proteins PsbA, PsbB, PsbC, PsbD, PsbE, PsbF, PsbH, PsbI, PsbJ, PsbK, PsbL, PsbM, PsbT, PsbX, PsbY, PsbZ, Psb30/Ycf12, peripheral proteins of the oxygen-evolving complex and a large number of cofactors. It forms dimeric complexes.

The protein localises to the plastid. Its subcellular location is the chloroplast thylakoid membrane. A core subunit of photosystem II (PSII), probably helps stabilize the reaction center. This Oedogonium cardiacum (Filamentous green alga) protein is Photosystem II reaction center protein Psb30.